Consider the following 272-residue polypeptide: MTLQEQIMKALHVQPVIDPKAEIRKRVDFLKDYVKKTGAKGFVLGISGGQDSTLAGRLAQLAVEEIRNEGGNATFIAVRLPYKVQKDEDDAQLALQFIQADQSVAFDIASTVDAFSNQYENLLDESLTDFNKGNVKARIRMVTQYAIGGQKGLLVIGTDHAAEAVTGFFTKFGDGGADLLPLTGLTKRQGRALLQELGADERLYLKMPTADLLDEKPGQADETELGITYDQLDDYLEGKTVPADVAEKIEKRYTVSEHKRQVPASMFDDWWK.

45–52 (GISGGQDS) serves as a coordination point for ATP. Asp-51 contributes to the Mg(2+) binding site. Arg-138 serves as a coordination point for deamido-NAD(+). Thr-158 lines the ATP pocket. A Mg(2+)-binding site is contributed by Glu-163. Positions 171 and 178 each coordinate deamido-NAD(+). Lys-187 and Thr-209 together coordinate ATP. 258-259 (HK) contacts deamido-NAD(+).

This sequence belongs to the NAD synthetase family. In terms of assembly, homodimer.

It carries out the reaction deamido-NAD(+) + NH4(+) + ATP = AMP + diphosphate + NAD(+) + H(+). It functions in the pathway cofactor biosynthesis; NAD(+) biosynthesis; NAD(+) from deamido-NAD(+) (ammonia route): step 1/1. In terms of biological role, catalyzes the ATP-dependent amidation of deamido-NAD to form NAD. Uses ammonia as a nitrogen source. The protein is NH(3)-dependent NAD(+) synthetase of Bacillus cereus (strain Q1).